The primary structure comprises 463 residues: Cysteine--tRNA ligase (463 aa).

C33 serves as a coordination point for Zn(2+). Positions 35 to 45 match the 'HIGH' region motif; it reads PTVYDFAHIGN. 3 residues coordinate Zn(2+): C221, H246, and E250. A 'KMSKS' region motif is present at residues 279-283; that stretch reads KMSKS. K282 provides a ligand contact to ATP.

It belongs to the class-I aminoacyl-tRNA synthetase family. As to quaternary structure, monomer. Zn(2+) is required as a cofactor.

The protein resides in the cytoplasm. It carries out the reaction tRNA(Cys) + L-cysteine + ATP = L-cysteinyl-tRNA(Cys) + AMP + diphosphate. In Rhizobium johnstonii (strain DSM 114642 / LMG 32736 / 3841) (Rhizobium leguminosarum bv. viciae), this protein is Cysteine--tRNA ligase.